The primary structure comprises 130 residues: Transcription antitermination protein NusB (130 aa).

It belongs to the NusB family.

Involved in transcription antitermination. Required for transcription of ribosomal RNA (rRNA) genes. Binds specifically to the boxA antiterminator sequence of the ribosomal RNA (rrn) operons. The sequence is that of Transcription antitermination protein NusB from Bacillus anthracis (strain A0248).